The primary structure comprises 338 residues: Large ribosomal subunit protein uL10 (338 aa).

The segment at 303 to 338 (VEVSAAPAAEEEKEEEKKEEEKKEEDTGAAGLALLF) is disordered. Basic and acidic residues predominate over residues 317-328 (EEKKEEEKKEED).

It belongs to the universal ribosomal protein uL10 family. Part of the 50S ribosomal subunit. Forms part of the ribosomal stalk which helps the ribosome interact with GTP-bound translation factors. Forms a heptameric L10(L12)2(L12)2(L12)2 complex, where L10 forms an elongated spine to which the L12 dimers bind in a sequential fashion.

Its function is as follows. Forms part of the ribosomal stalk, playing a central role in the interaction of the ribosome with GTP-bound translation factors. The protein is Large ribosomal subunit protein uL10 of Methanocaldococcus jannaschii (strain ATCC 43067 / DSM 2661 / JAL-1 / JCM 10045 / NBRC 100440) (Methanococcus jannaschii).